The primary structure comprises 1034 residues: N-acetyl-beta-glucosaminyl-glycoprotein 4-beta-N-acetylgalactosaminyltransferase 1 (1034 aa).

Topologically, residues 1–12 (MPWFPVKKVRKQ) are cytoplasmic. Residues 13 to 31 (MKLLLLLLLLTCAAWLTYV) form a helical; Signal-anchor for type II membrane protein membrane-spanning segment. Residues 32–1034 (HRSLVRPGRA…SRKGARAQRS (1003 aa)) lie on the Lumenal side of the membrane. The segment at 51–104 (DGEKLTGVTDSRGVRVPSSTQRSEDSSESHEEEQAPEGRGPNMLFPGGPRKPPP) is disordered. A compositionally biased stretch (basic and acidic residues) spans 72-83 (RSEDSSESHEEE). A glycan (N-linked (GlcNAc...) asparagine) is linked at N106. The region spanning 109-279 (HQTPPWREEF…LKFEIIDSAH (171 aa)) is the PA14 domain. 2 disordered regions span residues 450 to 486 (PTDASVQQSHRTPTPAASTGTTASPTPPTTSPLDEQT) and 556 to 600 (RVQL…QLHG). Residues 461 to 473 (TPTPAASTGTTAS) are compositionally biased toward low complexity. N-linked (GlcNAc...) asparagine glycosylation occurs at N611. Disordered regions lie at residues 626-669 (SQVS…PLGR) and 782-801 (GDEDGESPEPPPAASIHPDS). A compositionally biased stretch (acidic residues) spans 636 to 661 (EGEEGEEDGAPGDEATSEDSEEEEEP).

This sequence belongs to the chondroitin N-acetylgalactosaminyltransferase family.

The protein localises to the golgi apparatus. It is found in the golgi stack membrane. It catalyses the reaction an N-acetyl-beta-D-glucosaminyl derivative + UDP-N-acetyl-alpha-D-galactosamine = an N-acetyl-beta-D-galactosaminyl-(1-&gt;4)-N-acetyl-beta-D-glucosaminyl derivative + UDP + H(+). In terms of biological role, transfers N-acetylgalactosamine (GalNAc) from UDP-GalNAc to N-acetylglucosamine-beta-benzyl with a beta-1,4-linkage to form N,N'-diacetyllactosediamine, GalNAc-beta-1,4-GlcNAc structures in N-linked glycans and probably O-linked glycans. This Mus musculus (Mouse) protein is N-acetyl-beta-glucosaminyl-glycoprotein 4-beta-N-acetylgalactosaminyltransferase 1 (B4galnt4).